A 632-amino-acid polypeptide reads, in one-letter code: tRNA uridine 5-carboxymethylaminomethyl modification enzyme MnmG (632 aa).

14 to 19 provides a ligand contact to FAD; it reads GAGHAG. Position 273 to 287 (273 to 287) interacts with NAD(+); that stretch reads GPRYCPSFEDKIMRF.

Belongs to the MnmG family. As to quaternary structure, homodimer. Heterotetramer of two MnmE and two MnmG subunits. The cofactor is FAD.

It is found in the cytoplasm. Functionally, NAD-binding protein involved in the addition of a carboxymethylaminomethyl (cmnm) group at the wobble position (U34) of certain tRNAs, forming tRNA-cmnm(5)s(2)U34. This chain is tRNA uridine 5-carboxymethylaminomethyl modification enzyme MnmG, found in Clostridium novyi (strain NT).